We begin with the raw amino-acid sequence, 184 residues long: ATP-dependent protease subunit HslV (184 aa).

Residue Thr2 is part of the active site. 3 residues coordinate Na(+): Gly157, Cys160, and Thr163.

The protein belongs to the peptidase T1B family. HslV subfamily. In terms of assembly, a double ring-shaped homohexamer of HslV is capped on each side by a ring-shaped HslU homohexamer. The assembly of the HslU/HslV complex is dependent on binding of ATP.

It is found in the cytoplasm. It catalyses the reaction ATP-dependent cleavage of peptide bonds with broad specificity.. Its activity is regulated as follows. Allosterically activated by HslU binding. In terms of biological role, protease subunit of a proteasome-like degradation complex believed to be a general protein degrading machinery. In Vibrio vulnificus (strain CMCP6), this protein is ATP-dependent protease subunit HslV.